The sequence spans 412 residues: Ribosomal RNA large subunit methyltransferase G (412 aa).

The segment at 386-412 is disordered; sequence KAEPHENGESSSDTPNPQSSLYGGVKR. Residues 394–406 are compositionally biased toward polar residues; the sequence is ESSSDTPNPQSSL.

The protein belongs to the methyltransferase superfamily. RlmG family.

The protein resides in the cytoplasm. The enzyme catalyses guanosine(1835) in 23S rRNA + S-adenosyl-L-methionine = N(2)-methylguanosine(1835) in 23S rRNA + S-adenosyl-L-homocysteine + H(+). In terms of biological role, specifically methylates the guanine in position 1835 (m2G1835) of 23S rRNA. This Shewanella sediminis (strain HAW-EB3) protein is Ribosomal RNA large subunit methyltransferase G.